An 871-amino-acid polypeptide reads, in one-letter code: Rho guanine nucleotide exchange factor 26 (871 aa).

Disordered regions lie at residues 1–49, 86–233, and 288–310; these read MDGE…LLIT, AQRR…NPSV, and PLGHAGEESEVDNDVDSPGSLRR. The residue at position 22 (serine 22) is a Phosphoserine. Residues 136–156 are compositionally biased toward pro residues; the sequence is PAPPPPPVLRPPRTPNAPAPC. Over residues 173–192 the composition is skewed to polar residues; that stretch reads PTANGLAANNDSPGSGSQSG. Position 392 is a phosphoserine (serine 392). Residues 439 to 623 form the DH domain; sequence KRQEAIFEVI…SKLVRLCNEG (185 aa). Residues 655-782 form the PH domain; that stretch reads WLVKRGELTA…WITALGHSSG (128 aa). Residues 789–850 enclose the SH3 domain; that stretch reads TSLTQVEIVR…PMECAKEITC (62 aa).

As to quaternary structure, interacts with ICAM1 and RHOG. In terms of tissue distribution, isoform 1 is broadly expressed, with highest levels in liver (at protein level). Certain mRNA species appear to be specifically expressed in prostate and liver.

Its subcellular location is the cell projection. It localises to the ruffle. In terms of biological role, activates RhoG GTPase by promoting the exchange of GDP by GTP. Required for the formation of membrane ruffles during macropinocytosis. Required for the formation of cup-like structures during trans-endothelial migration of leukocytes. In case of Salmonella enterica infection, activated by SopB, which induces cytoskeleton rearrangements and promotes bacterial entry. In Homo sapiens (Human), this protein is Rho guanine nucleotide exchange factor 26 (ARHGEF26).